The sequence spans 157 residues: 2-C-methyl-D-erythritol 2,4-cyclodiphosphate synthase (157 aa).

The a divalent metal cation site is built by Asp9 and His11. 4-CDP-2-C-methyl-D-erythritol 2-phosphate contacts are provided by residues 9-11 (DVH) and 35-36 (HS). His43 is an a divalent metal cation binding site. Residues 57–59 (DIG), 62–66 (FPDTD), 101–107 (AEKPKMA), 133–136 (TTTE), Phe140, and Arg143 contribute to the 4-CDP-2-C-methyl-D-erythritol 2-phosphate site.

This sequence belongs to the IspF family. Homotrimer. The cofactor is a divalent metal cation.

It catalyses the reaction 4-CDP-2-C-methyl-D-erythritol 2-phosphate = 2-C-methyl-D-erythritol 2,4-cyclic diphosphate + CMP. The protein operates within isoprenoid biosynthesis; isopentenyl diphosphate biosynthesis via DXP pathway; isopentenyl diphosphate from 1-deoxy-D-xylulose 5-phosphate: step 4/6. In terms of biological role, involved in the biosynthesis of isopentenyl diphosphate (IPP) and dimethylallyl diphosphate (DMAPP), two major building blocks of isoprenoid compounds. Catalyzes the conversion of 4-diphosphocytidyl-2-C-methyl-D-erythritol 2-phosphate (CDP-ME2P) to 2-C-methyl-D-erythritol 2,4-cyclodiphosphate (ME-CPP) with a corresponding release of cytidine 5-monophosphate (CMP). This Listeria monocytogenes serotype 4b (strain F2365) protein is 2-C-methyl-D-erythritol 2,4-cyclodiphosphate synthase.